The chain runs to 170 residues: ATP synthase subunit b, chloroplastic (170 aa).

Residues 15–35 (ILETNVINLAVVVGVVVFFVG) traverse the membrane as a helical segment.

It belongs to the ATPase B chain family. F-type ATPases have 2 components, F(1) - the catalytic core - and F(0) - the membrane proton channel. F(1) has five subunits: alpha(3), beta(3), gamma(1), delta(1), epsilon(1). F(0) has four main subunits: a(1), b(1), b'(1) and c(10-14). The alpha and beta chains form an alternating ring which encloses part of the gamma chain. F(1) is attached to F(0) by a central stalk formed by the gamma and epsilon chains, while a peripheral stalk is formed by the delta, b and b' chains.

The protein localises to the plastid. It is found in the chloroplast thylakoid membrane. Functionally, f(1)F(0) ATP synthase produces ATP from ADP in the presence of a proton or sodium gradient. F-type ATPases consist of two structural domains, F(1) containing the extramembraneous catalytic core and F(0) containing the membrane proton channel, linked together by a central stalk and a peripheral stalk. During catalysis, ATP synthesis in the catalytic domain of F(1) is coupled via a rotary mechanism of the central stalk subunits to proton translocation. Component of the F(0) channel, it forms part of the peripheral stalk, linking F(1) to F(0). This Stigeoclonium helveticum (Green alga) protein is ATP synthase subunit b, chloroplastic.